A 561-amino-acid polypeptide reads, in one-letter code: Liver carboxylesterase B-1 (561 aa).

An N-terminal signal peptide occupies residues 1–18 (MCLRSLFLVSLATCVVCG). The N-linked (GlcNAc...) asparagine glycan is linked to Asn79. The cysteines at positions 87 and 116 are disulfide-linked. Catalysis depends on Ser221, which acts as the Acyl-ester intermediate. A disulfide bridge links Cys273 with Cys284. Residues Glu353 and His466 each act as charge relay system in the active site. The Prevents secretion from ER motif lies at 558-561 (HNEL).

Belongs to the type-B carboxylesterase/lipase family. As to quaternary structure, monomer.

It is found in the endoplasmic reticulum lumen. The catalysed reaction is a carboxylic ester + H2O = an alcohol + a carboxylate + H(+). Involved in the detoxification of xenobiotics and in the activation of ester and amide prodrugs. This Rattus norvegicus (Rat) protein is Liver carboxylesterase B-1.